The primary structure comprises 840 residues: UPF0508 protein SCY_2952 (840 aa).

Belongs to the UPF0508 family.

The polypeptide is UPF0508 protein SCY_2952 (Saccharomyces cerevisiae (strain YJM789) (Baker's yeast)).